Reading from the N-terminus, the 322-residue chain is Retinal homeobox protein Rx-A (322 aa).

The short motif at 32–39 (HSIEAILG) is the Octapeptide motif element. Over residues 75 to 87 (TEEIHPQQEHLED) the composition is skewed to basic and acidic residues. Residues 75 to 136 (TEEIHPQQEH…KKKHRRNRTT (62 aa)) are disordered. Residues 100 to 117 (KTSSECLSPGLSTSNSDN) show a composition bias toward polar residues. Residues 130 to 189 (HRRNRTTFTTYQLHELERAFEKSHYPDVYSREELAMKVNLPEVRVQVWFQNRRAKWRRQE) constitute a DNA-binding region (homeobox). An OAR motif is present at residues 302–315 (NSIASLRMKAKEHI). A Nuclear localization signal motif is present at residues 308-312 (RMKAK).

The protein belongs to the paired homeobox family. Bicoid subfamily. As to expression, highly expressed in anterior neural plate followed by neural retina, pigmented epithelium, in pineal gland, diencephalon floor and epiphysis. At later stages, the neuroretina remains the primary site of expression. No expression in the developing lens and cornea.

Its subcellular location is the nucleus. Its function is as follows. Plays a critical role in eye formation by regulating the initial specification of retinal cells and/or their subsequent proliferation. This is Retinal homeobox protein Rx-A (rax-a) from Xenopus laevis (African clawed frog).